We begin with the raw amino-acid sequence, 681 residues long: GAS2-like protein 1 (681 aa).

Ala2 carries the post-translational modification N-acetylalanine. The Calponin-homology (CH) domain maps to 27-148 (EAMKEDLAEW…CLLEVARRGA (122 aa)). 3 disordered regions span residues 168–204 (LRAA…TPSD), 278–509 (STAH…PLQL), and 536–681 (ASVT…DSWM). Residues 186 to 199 (ETAPAPGTPARGPR) show a composition bias toward low complexity. Thr193 carries the phosphothreonine modification. A GAR domain is found at 203–275 (SDLRNLDELV…HYLDKHDPCR (73 aa)). Residues 291-303 (FSPQRVSPTTSPR) show a composition bias toward polar residues. A phosphoserine mark is found at Ser306 and Ser316. A compositionally biased stretch (basic and acidic residues) spans 327-342 (STKEGPETPPRPRDQL). A Phosphothreonine modification is found at Thr334. 2 positions are modified to phosphoserine: Ser352 and Ser355. Residues 354–365 (DSDSSASSAQSG) show a composition bias toward low complexity. Over residues 370–381 (RSDDTGTGPRRE) the composition is skewed to basic and acidic residues. Phosphothreonine is present on Thr391. Ser394 carries the post-translational modification Phosphoserine. Positions 404–413 (QSRDRLDRGR) are enriched in basic and acidic residues. Residues Ser436, Ser438, Ser479, and Ser486 each carry the phosphoserine modification. Basic and acidic residues predominate over residues 437-454 (QSREEQAVLLVRRDRDGQ). The segment covering 475 to 493 (PRARSPAAPRLSRVSSPSP) has biased composition (low complexity). Omega-N-methylarginine is present on Arg487. 2 positions are modified to phosphoserine: Ser490 and Ser492. Thr498 bears the Phosphothreonine mark. Arg504 bears the Omega-N-methylarginine mark. Positions 542–556 (GPVPDPARAPDPPAP) are enriched in pro residues. A compositionally biased stretch (low complexity) spans 557–571 (DSAYCSSSSSSSSLS). Arg633 bears the Omega-N-methylarginine mark. The span at 634–644 (GRMDTQPDRKP) shows a compositional bias: basic and acidic residues. Ser657 carries the post-translational modification Phosphoserine.

It belongs to the GAS2 family. In terms of assembly, interacts with MAPRE1.

The protein resides in the cytoplasm. It is found in the cytoskeleton. Its subcellular location is the stress fiber. In terms of biological role, involved in the cross-linking of microtubules and microfilaments. Regulates microtubule dynamics and stability by interacting with microtubule plus-end tracking proteins, such as MAPRE1, to regulate microtubule growth along actin stress fibers. This chain is GAS2-like protein 1 (GAS2L1), found in Homo sapiens (Human).